Here is a 365-residue protein sequence, read N- to C-terminus: tRNA/tmRNA (uracil-C(5))-methyltransferase (365 aa).

5 residues coordinate S-adenosyl-L-methionine: Q196, Y224, N229, E245, and D298. Catalysis depends on C323, which acts as the Nucleophile. The Proton acceptor role is filled by E357.

This sequence belongs to the class I-like SAM-binding methyltransferase superfamily. RNA M5U methyltransferase family. TrmA subfamily.

The enzyme catalyses uridine(54) in tRNA + S-adenosyl-L-methionine = 5-methyluridine(54) in tRNA + S-adenosyl-L-homocysteine + H(+). It catalyses the reaction uridine(341) in tmRNA + S-adenosyl-L-methionine = 5-methyluridine(341) in tmRNA + S-adenosyl-L-homocysteine + H(+). In terms of biological role, dual-specificity methyltransferase that catalyzes the formation of 5-methyluridine at position 54 (m5U54) in all tRNAs, and that of position 341 (m5U341) in tmRNA (transfer-mRNA). This is tRNA/tmRNA (uracil-C(5))-methyltransferase from Nautilia profundicola (strain ATCC BAA-1463 / DSM 18972 / AmH).